A 259-amino-acid chain; its full sequence is NADPH-dependent reductase BacG (259 aa).

NADP(+) is bound by residues 12-15, 34-36, 62-63, Ile-90, Lys-113, and 185-191; these read SQGI, SRN, DM, and GFIATDR.

The protein belongs to the short-chain dehydrogenases/reductases (SDR) family. In terms of assembly, homodimer.

It is found in the cytoplasm. The protein operates within antibiotic biosynthesis; bacilysin biosynthesis. Functionally, along with the bacABCDEF operon, BacG is involved in the biosynthesis of the nonribosomally synthesized dipeptide antibiotic bacilysin, composed of L-alanine and L-anticapsin. Bacilysin is an irreversible inactivator of the glutaminase domain of glucosamine synthetase. BacG catalyzes the stereoselective reduction of exocyclic-delta(3),delta(5)-dihydro-hydroxyphenylpyruvate (ex-H2HPP), adding a pro-S hydride equivalent to C4 position to yield tetrahydro-hydroxyphenylpyruvate (H4HPP). Although the 3Z,7R-ex-H2HPP isomer is kinetically disfavored by BacB and produced in a smaller quantity than 3E,7R-ex-H2HPP, it is the preferred substrate for the conjugate reduction reaction of BacG. The protein is NADPH-dependent reductase BacG of Bacillus subtilis (strain 168).